The chain runs to 66 residues: 14-3-3-like protein 2 (66 aa).

The protein belongs to the 14-3-3 family.

In Pseudotsuga menziesii (Douglas-fir), this protein is 14-3-3-like protein 2.